The sequence spans 73 residues: Putative antimicrobial peptide clone 4 (73 aa).

An N-terminal signal peptide occupies residues 1-22 (MQMKYLIPIFFLVLIVADHCHA). Positions 45–73 (DITSQIEQYRNLQKREAELEDILANLPVY) are excised as a propeptide.

Belongs to the non-disulfide-bridged peptide (NDBP) superfamily. Short antimicrobial peptide (group 4) family. As to expression, expressed by the venom gland.

The protein localises to the secreted. In terms of biological role, antimicrobial peptide. Has a high antibacterial activity against the Gram-positive bacterium S.aureus (MIC=5-17.30 uM), the methicillin-resistant S.aureus (MRSA) (MIC=17.30 uM), and E.faecalis (MIC=69.23 uM). Has antifungal activity against Candida spp. and one Cryptococcus neoformans strains with MICs values ranging from 6.25 to 100 uM. Also shows an inhibitory activity on C.albicans biofilms at high concentrations. Has a moderate hemolytic potency (18% at 20 uM). Also inhibits the growth of the five cancer cell lines tested. In the model of polymicrobial sepsis, it exhibits an antibiotic effect, reducing the levels of microorganisms in the infectious focus and the inflammatory responses in the lung and cecum of septic animals. In Tityus costatus (Brazilian scorpion), this protein is Putative antimicrobial peptide clone 4.